Reading from the N-terminus, the 405-residue chain is CCA-adding enzyme (405 aa).

Residues glycine 8 and arginine 11 each contribute to the ATP site. Positions 8 and 11 each coordinate CTP. Mg(2+)-binding residues include glutamate 21 and aspartate 23. 3 residues coordinate ATP: arginine 91, arginine 137, and arginine 140. CTP contacts are provided by arginine 91, arginine 137, and arginine 140. The 107-residue stretch at 220-326 (PLSHGLSTLS…LNFFDELDLW (107 aa)) folds into the HD domain.

This sequence belongs to the tRNA nucleotidyltransferase/poly(A) polymerase family. Bacterial CCA-adding enzyme type 2 subfamily. It depends on Mg(2+) as a cofactor.

It carries out the reaction a tRNA precursor + 2 CTP + ATP = a tRNA with a 3' CCA end + 3 diphosphate. The catalysed reaction is a tRNA with a 3' CCA end + 2 CTP + ATP = a tRNA with a 3' CCACCA end + 3 diphosphate. Its function is as follows. Catalyzes the addition and repair of the essential 3'-terminal CCA sequence in tRNAs without using a nucleic acid template. Adds these three nucleotides in the order of C, C, and A to the tRNA nucleotide-73, using CTP and ATP as substrates and producing inorganic pyrophosphate. tRNA 3'-terminal CCA addition is required both for tRNA processing and repair. Also involved in tRNA surveillance by mediating tandem CCA addition to generate a CCACCA at the 3' terminus of unstable tRNAs. While stable tRNAs receive only 3'-terminal CCA, unstable tRNAs are marked with CCACCA and rapidly degraded. This is CCA-adding enzyme from Hamiltonella defensa subsp. Acyrthosiphon pisum (strain 5AT).